The chain runs to 206 residues: Large ribosomal subunit protein uL4 (206 aa).

Positions 42-54 (RRQQGTHQSQGRS) are enriched in polar residues. A disordered region spans residues 42–94 (RRQQGTHQSQGRSDVSRTGAKMFKQKGTGRARHSSARAPQFRGGGKAHGPVFR). Residues 64–76 (FKQKGTGRARHSS) are compositionally biased toward basic residues.

Belongs to the universal ribosomal protein uL4 family. As to quaternary structure, part of the 50S ribosomal subunit.

One of the primary rRNA binding proteins, this protein initially binds near the 5'-end of the 23S rRNA. It is important during the early stages of 50S assembly. It makes multiple contacts with different domains of the 23S rRNA in the assembled 50S subunit and ribosome. Its function is as follows. Forms part of the polypeptide exit tunnel. The sequence is that of Large ribosomal subunit protein uL4 from Bartonella tribocorum (strain CIP 105476 / IBS 506).